Here is a 332-residue protein sequence, read N- to C-terminus: Adenosine deaminase (332 aa).

The Zn(2+) site is built by histidine 12 and histidine 14. Residues histidine 14, aspartate 16, and glycine 170 each coordinate substrate. Histidine 197 serves as a coordination point for Zn(2+). Catalysis depends on glutamate 200, which acts as the Proton donor. Aspartate 278 serves as a coordination point for Zn(2+).

The protein belongs to the metallo-dependent hydrolases superfamily. Adenosine and AMP deaminases family. Adenosine deaminase subfamily. Zn(2+) is required as a cofactor.

The enzyme catalyses adenosine + H2O + H(+) = inosine + NH4(+). It carries out the reaction 2'-deoxyadenosine + H2O + H(+) = 2'-deoxyinosine + NH4(+). Catalyzes the hydrolytic deamination of adenosine and 2-deoxyadenosine. This chain is Adenosine deaminase, found in Clostridium perfringens (strain ATCC 13124 / DSM 756 / JCM 1290 / NCIMB 6125 / NCTC 8237 / Type A).